The primary structure comprises 242 residues: Prosalusin (242 aa).

A signal peptide spans 1 to 26 (MAAATRSCRPWGSLLGLIWLVSAAAA). A propeptide spanning residues 27 to 189 (SWDLSSLRCN…SSWVVYGTNY (163 aa)) is cleaved from the precursor. 93 to 100 (GWTGTGKS) is a binding site for ATP. Residue asparagine 149 is glycosylated (N-linked (GlcNAc...) asparagine).

It belongs to the ClpA/ClpB family. Torsin subfamily.

It is found in the secreted. Its function is as follows. Salusin may be a endocrine and/or paracrine factor able to increase intracellular calcium concentrations and induce cell mitogenesis. Salusin may also be a potent hypotensive peptide. In Bos taurus (Bovine), this protein is Prosalusin (TOR2A).